Here is a 279-residue protein sequence, read N- to C-terminus: MAAAFDPSGRFPDLFTSVGTSSFSAFLSKAAPELLPGRRPLPPGMATGLTPHATTIVAIATAGGVVLAGDRRATMGNLIAQRDVEKVHPADAYSLVGMAGAAGIGIELTRLFQVELEHYEKTEGAMLSLDGKANRLAAMVRGNLGAAMQGLAVVPLFAGFDLAATDPAKAGRIFSFDVTGGPYEETGYDAVGSGSVFAKSALKKRFRLGLSVDDAVRLAVEALYDAADDDTATGGPDLTRRIYPVVMSATAEGTHRLTEAETAAIAESVVAGRMENPGG.

The propeptide at 1–53 (MAAAFDPSGRFPDLFTSVGTSSFSAFLSKAAPELLPGRRPLPPGMATGLTPHA) is removed in mature form; by autocatalysis. T54 serves as the catalytic Nucleophile.

The protein belongs to the peptidase T1B family. The 20S proteasome core is composed of 14 alpha and 14 beta subunits that assemble into four stacked heptameric rings, resulting in a barrel-shaped structure. The two inner rings, each composed of seven catalytic beta subunits, are sandwiched by two outer rings, each composed of seven alpha subunits. The catalytic chamber with the active sites is on the inside of the barrel. Has a gated structure, the ends of the cylinder being occluded by the N-termini of the alpha-subunits. Is capped by the proteasome-associated ATPase, ARC.

The protein localises to the cytoplasm. The enzyme catalyses Cleavage of peptide bonds with very broad specificity.. Its pathway is protein degradation; proteasomal Pup-dependent pathway. With respect to regulation, the formation of the proteasomal ATPase ARC-20S proteasome complex, likely via the docking of the C-termini of ARC into the intersubunit pockets in the alpha-rings, may trigger opening of the gate for substrate entry. Interconversion between the open-gate and close-gate conformations leads to a dynamic regulation of the 20S proteasome proteolysis activity. In terms of biological role, component of the proteasome core, a large protease complex with broad specificity involved in protein degradation. The protein is Proteasome subunit beta 2 of Salinispora tropica (strain ATCC BAA-916 / DSM 44818 / JCM 13857 / NBRC 105044 / CNB-440).